The sequence spans 421 residues: Serine--tRNA ligase (421 aa).

229–231 (TSE) is an L-serine binding site. 260–262 (RRE) is an ATP binding site. Residue glutamate 283 participates in L-serine binding. 347 to 350 (EISS) serves as a coordination point for ATP. Serine 381 contributes to the L-serine binding site.

It belongs to the class-II aminoacyl-tRNA synthetase family. Type-1 seryl-tRNA synthetase subfamily. Homodimer. The tRNA molecule binds across the dimer.

Its subcellular location is the cytoplasm. It carries out the reaction tRNA(Ser) + L-serine + ATP = L-seryl-tRNA(Ser) + AMP + diphosphate + H(+). The enzyme catalyses tRNA(Sec) + L-serine + ATP = L-seryl-tRNA(Sec) + AMP + diphosphate + H(+). It participates in aminoacyl-tRNA biosynthesis; selenocysteinyl-tRNA(Sec) biosynthesis; L-seryl-tRNA(Sec) from L-serine and tRNA(Sec): step 1/1. In terms of biological role, catalyzes the attachment of serine to tRNA(Ser). Is also able to aminoacylate tRNA(Sec) with serine, to form the misacylated tRNA L-seryl-tRNA(Sec), which will be further converted into selenocysteinyl-tRNA(Sec). The protein is Serine--tRNA ligase of Fusobacterium nucleatum subsp. nucleatum (strain ATCC 25586 / DSM 15643 / BCRC 10681 / CIP 101130 / JCM 8532 / KCTC 2640 / LMG 13131 / VPI 4355).